Consider the following 362-residue polypeptide: Chorismate synthase (362 aa).

Arg-47 serves as a coordination point for NADP(+). FMN contacts are provided by residues 124 to 126 (RSS), Gly-286, 301 to 305 (KPTAT), and Arg-327.

The protein belongs to the chorismate synthase family. Homotetramer. FMNH2 serves as cofactor.

The catalysed reaction is 5-O-(1-carboxyvinyl)-3-phosphoshikimate = chorismate + phosphate. Its pathway is metabolic intermediate biosynthesis; chorismate biosynthesis; chorismate from D-erythrose 4-phosphate and phosphoenolpyruvate: step 7/7. Catalyzes the anti-1,4-elimination of the C-3 phosphate and the C-6 proR hydrogen from 5-enolpyruvylshikimate-3-phosphate (EPSP) to yield chorismate, which is the branch point compound that serves as the starting substrate for the three terminal pathways of aromatic amino acid biosynthesis. This reaction introduces a second double bond into the aromatic ring system. In Synechococcus sp. (strain ATCC 27144 / PCC 6301 / SAUG 1402/1) (Anacystis nidulans), this protein is Chorismate synthase.